We begin with the raw amino-acid sequence, 106 residues long: UPF0145 protein PputW619_2377 (106 aa).

The protein belongs to the UPF0145 family.

This Pseudomonas putida (strain W619) protein is UPF0145 protein PputW619_2377.